Consider the following 68-residue polypeptide: U-poneritoxin(01)-Om4b (68 aa).

Positions 1–25 are cleaved as a signal peptide; sequence MKPSGLTLAFLVVFMMAIMYNSVQA. A propeptide spanning residues 26–39 is cleaved from the precursor; the sequence is EALADADAEAFAEA.

It belongs to the formicidae venom precursor-01 superfamily. As to quaternary structure, homo- or heterodimer with PLP4 (AC A0A348G5W0); disulfide-linked. Truncated sequences of this peptide have also been found in the venom. It is possible they have been cleaved in the venom. Expressed by the venom gland.

Its subcellular location is the secreted. Its function is as follows. This homodimer composed of two cationic amphipathic alpha-helical peptides has antimicrobial activities against E.coli, S.aureus (MIC=3.1 uM), and S.cerevisiae (MIC=3.1 uM). It also shows histamine-releasing activity (66.4% at 10 uM) and a weak hemolytic activity (10.5% at 50 uM). The chain is U-poneritoxin(01)-Om4b from Odontomachus monticola (Trap-jaw ant).